Consider the following 221-residue polypeptide: MSATESSSIFTLSHNSNLQDILAANAKWASQMNNIQPTLFPDHNAKGQSPHTLFIGCSDSRYNENCLGVLPGEVFTWKNVANICHSEDLTLKATLEFAIICLKVNKVIICGHTDCGGIKTCLTNQREALPKVNCSHLYKYLDDIDTMYHEESQNLIHLKTQREKSHYLSHCNVKRQFNRIIENPTVQTAVQNGELQVYGLLYNVEDGLLQTVSTYTKVTPK.

Residues cysteine 57, aspartate 59, histidine 112, and cysteine 115 each contribute to the Zn(2+) site.

Belongs to the beta-class carbonic anhydrase family. Requires Zn(2+) as cofactor.

The protein localises to the cytoplasm. Its subcellular location is the nucleus. It is found in the mitochondrion intermembrane space. It carries out the reaction hydrogencarbonate + H(+) = CO2 + H2O. Catalyzes the reversible hydration of CO(2) to H(2)CO(3). The main role may be to provide inorganic carbon for the bicarbonate-dependent carboxylation reactions catalyzed by pyruvate carboxylase, acetyl-CoA carboxylase and carbamoyl-phosphate synthetase. Involved in protection against oxidative damage. Encodes a substrate for the non-classical protein export pathway for proteins that lack a cleavable signal sequence. The polypeptide is Carbonic anhydrase (NCE103) (Saccharomyces cerevisiae (strain ATCC 204508 / S288c) (Baker's yeast)).